Here is a 592-residue protein sequence, read N- to C-terminus: Aspartate--tRNA ligase (592 aa).

Residue E173 coordinates L-aspartate. The segment at Q197–K200 is aspartate. R219 is a binding site for L-aspartate. ATP-binding positions include R219–E221 and Q228. Position 448 (H448) interacts with L-aspartate. Position 482 (E482) interacts with ATP. Residue R489 coordinates L-aspartate. G534–R537 is a binding site for ATP.

This sequence belongs to the class-II aminoacyl-tRNA synthetase family. Type 1 subfamily. As to quaternary structure, homodimer.

The protein localises to the cytoplasm. It carries out the reaction tRNA(Asp) + L-aspartate + ATP = L-aspartyl-tRNA(Asp) + AMP + diphosphate. Functionally, catalyzes the attachment of L-aspartate to tRNA(Asp) in a two-step reaction: L-aspartate is first activated by ATP to form Asp-AMP and then transferred to the acceptor end of tRNA(Asp). The protein is Aspartate--tRNA ligase of Shewanella baltica (strain OS195).